Reading from the N-terminus, the 273-residue chain is Ribosomal RNA small subunit methyltransferase A (273 aa).

Asn18, Leu20, Gly45, Glu66, Asp91, and Asn113 together coordinate S-adenosyl-L-methionine.

This sequence belongs to the class I-like SAM-binding methyltransferase superfamily. rRNA adenine N(6)-methyltransferase family. RsmA subfamily.

The protein localises to the cytoplasm. The catalysed reaction is adenosine(1518)/adenosine(1519) in 16S rRNA + 4 S-adenosyl-L-methionine = N(6)-dimethyladenosine(1518)/N(6)-dimethyladenosine(1519) in 16S rRNA + 4 S-adenosyl-L-homocysteine + 4 H(+). Functionally, specifically dimethylates two adjacent adenosines (A1518 and A1519) in the loop of a conserved hairpin near the 3'-end of 16S rRNA in the 30S particle. May play a critical role in biogenesis of 30S subunits. The protein is Ribosomal RNA small subunit methyltransferase A of Escherichia fergusonii (strain ATCC 35469 / DSM 13698 / CCUG 18766 / IAM 14443 / JCM 21226 / LMG 7866 / NBRC 102419 / NCTC 12128 / CDC 0568-73).